A 473-amino-acid polypeptide reads, in one-letter code: Glucose facilitated diffusion protein (473 aa).

Residues 1-13 (MSSESSQGLVTRL) lie on the Cytoplasmic side of the membrane. The chain crosses the membrane as a helical span at residues 14–34 (ALIAAIGGLLFGYDSAVIAAI). The Periplasmic segment spans residues 35–59 (GTPVDIHFIAPRHLSATAAASLSGM). A helical membrane pass occupies residues 60–80 (VVVAVLVGCVTGSLLSGWIGI). Residues 81–85 (RFGRR) are Cytoplasmic-facing. A helical transmembrane segment spans residues 86–106 (GGLLMSSICFVAAGFGAALTE). The Periplasmic portion of the chain corresponds to 107 to 112 (KLFGTG). Residues 113–133 (GSALQIFCFFRFLAGLGIGVV) traverse the membrane as a helical segment. The Cytoplasmic segment spans residues 134-158 (STLTPTYIAEIAPPDKRGQMVSGQQ). Residues 159–179 (MAIVTGALTGYIFTWLLAHFG) traverse the membrane as a helical segment. The Periplasmic segment spans residues 180 to 187 (SIDWVNAS). Residues 188–208 (GWCWSPASEGLIGIAFLLLLL) traverse the membrane as a helical segment. At 209 to 257 (TAPDTPHWLVMKGRHSEASKILARLEPQADPNLTIQKIKAGFDKAMDKS) the chain is on the cytoplasmic side. The chain crosses the membrane as a helical span at residues 258 to 278 (SAGLFAFGITVVFAGVSVAAF). Residues 279–303 (QQLVGINAVLYYAPQMFQNLGFGAD) are Periplasmic-facing. A helical transmembrane segment spans residues 304–324 (TALLQTISIGVVNFIFTMIAS). Topologically, residues 325 to 335 (RVVDRFGRKPL) are cytoplasmic. Residues 336-356 (LIWGALGMAAMMAVLGCCFWF) traverse the membrane as a helical segment. Over 357 to 366 (KVGGVLPLAS) the chain is Periplasmic. The helical transmembrane segment at 367 to 387 (VLLYIAVFGMSWGPVCWVVLS) threads the bilayer. Residues 388–396 (EMFPSSIKG) lie on the Cytoplasmic side of the membrane. Residues 397–417 (AAMPIAVTGQWLANILVNFLF) form a helical membrane-spanning segment. Residues 418–429 (KVADGSPALNQT) are Periplasmic-facing. The chain crosses the membrane as a helical span at residues 430–450 (FNHGFSYLVFAALSILGGLIV). Topologically, residues 451–473 (ARFVPETKGRSLDEIEEMWRSQK) are cytoplasmic.

This sequence belongs to the major facilitator superfamily. Sugar transporter (TC 2.A.1.1) family.

It is found in the cell inner membrane. Functionally, allows uptake of glucose by the cell; allows growth on glucose minimal medium by E.coli cells impaired in glucose transport. Also transports fructose, but has a strong preference for glucose. This chain is Glucose facilitated diffusion protein, found in Zymomonas mobilis subsp. mobilis (strain ATCC 31821 / ZM4 / CP4).